The chain runs to 94 residues: Aspartyl/glutamyl-tRNA(Asn/Gln) amidotransferase subunit C (94 aa).

Belongs to the GatC family. Heterotrimer of A, B and C subunits.

It carries out the reaction L-glutamyl-tRNA(Gln) + L-glutamine + ATP + H2O = L-glutaminyl-tRNA(Gln) + L-glutamate + ADP + phosphate + H(+). The catalysed reaction is L-aspartyl-tRNA(Asn) + L-glutamine + ATP + H2O = L-asparaginyl-tRNA(Asn) + L-glutamate + ADP + phosphate + 2 H(+). In terms of biological role, allows the formation of correctly charged Asn-tRNA(Asn) or Gln-tRNA(Gln) through the transamidation of misacylated Asp-tRNA(Asn) or Glu-tRNA(Gln) in organisms which lack either or both of asparaginyl-tRNA or glutaminyl-tRNA synthetases. The reaction takes place in the presence of glutamine and ATP through an activated phospho-Asp-tRNA(Asn) or phospho-Glu-tRNA(Gln). The polypeptide is Aspartyl/glutamyl-tRNA(Asn/Gln) amidotransferase subunit C (Solidesulfovibrio magneticus (strain ATCC 700980 / DSM 13731 / RS-1) (Desulfovibrio magneticus)).